The sequence spans 187 residues: uncharacterized protein (187 aa).

Residues Arg53–Gly187 enclose the Tyr recombinase domain. Catalysis depends on residues Arg98 and Lys123.

The protein belongs to the 'phage' integrase family.

This is an uncharacterized protein from Sinorhizobium fredii (strain NBRC 101917 / NGR234).